A 206-amino-acid polypeptide reads, in one-letter code: MSRTLVLVRHGQSEWNLKNLFTGWRDPGLTEQGHAEAKAAGQRLKAAGLKFDIAYTSALSRAQVTCQHILDELGQPGLETIRDQALNERDYGDLSGLNKDDARAKWGEEQVHIWRRSYDVPPPGGESLKDTGARVWPYYLHTIQPHVLREETVLVAAHGNSLRALIMALEGLTPEQILKQELNTGVPIIYRLNADSTVASKEILSA.

Substrate-binding positions include R9 to N16, T22 to G23, R61, E88 to Y91, K99, R115 to R116, and G159 to N160. The active-site Tele-phosphohistidine intermediate is the H10. E88 functions as the Proton donor/acceptor in the catalytic mechanism.

This sequence belongs to the phosphoglycerate mutase family. BPG-dependent PGAM subfamily. Homodimer.

The enzyme catalyses (2R)-2-phosphoglycerate = (2R)-3-phosphoglycerate. It functions in the pathway carbohydrate degradation; glycolysis; pyruvate from D-glyceraldehyde 3-phosphate: step 3/5. Its function is as follows. Catalyzes the interconversion of 2-phosphoglycerate and 3-phosphoglycerate. The chain is 2,3-bisphosphoglycerate-dependent phosphoglycerate mutase from Brucella melitensis biotype 2 (strain ATCC 23457).